Reading from the N-terminus, the 469-residue chain is Glutamate--tRNA ligase (469 aa).

A 'HIGH' region motif is present at residues 9–19; it reads PSPTGFLHVGG. Zn(2+)-binding residues include Cys98, Cys100, Cys125, and Asp127. The short motif at 236–240 is the 'KMSKS' region element; the sequence is KLSKR. Lys239 serves as a coordination point for ATP.

The protein belongs to the class-I aminoacyl-tRNA synthetase family. Glutamate--tRNA ligase type 1 subfamily. Monomer. It depends on Zn(2+) as a cofactor.

The protein localises to the cytoplasm. It catalyses the reaction tRNA(Glu) + L-glutamate + ATP = L-glutamyl-tRNA(Glu) + AMP + diphosphate. Its function is as follows. Catalyzes the attachment of glutamate to tRNA(Glu) in a two-step reaction: glutamate is first activated by ATP to form Glu-AMP and then transferred to the acceptor end of tRNA(Glu). This chain is Glutamate--tRNA ligase, found in Shewanella sediminis (strain HAW-EB3).